The sequence spans 264 residues: Cell division protein FtsQ (264 aa).

The interval 1 to 24 (MAGPTTAERGDRQQESSGPPPARW) is disordered. Topologically, residues 1–31 (MAGPTTAERGDRQQESSGPPPARWSGTRRLR) are cytoplasmic. The helical transmembrane segment at 32–52 (ALVVLAALLVLLAGGCAWLLY) threads the bilayer. Topologically, residues 53 to 264 (GSSWLRLERV…VPTAPASSGS (212 aa)) are extracellular. Residues 57–126 (LRLERVSVSG…HGIGLKVTER (70 aa)) enclose the POTRA domain.

The protein belongs to the FtsQ/DivIB family. FtsQ subfamily.

Its subcellular location is the cell membrane. Essential cell division protein. The sequence is that of Cell division protein FtsQ from Streptomyces collinus.